The following is a 123-amino-acid chain: Small ribosomal subunit protein uS12 (123 aa).

3-methylthioaspartic acid is present on Asp-89. Positions 104 to 123 (TQGVKDRRQRRSKYGAKRPK) are disordered. The span at 110 to 123 (RRQRRSKYGAKRPK) shows a compositional bias: basic residues.

The protein belongs to the universal ribosomal protein uS12 family. In terms of assembly, part of the 30S ribosomal subunit. Contacts proteins S8 and S17. May interact with IF1 in the 30S initiation complex.

Its function is as follows. With S4 and S5 plays an important role in translational accuracy. Functionally, interacts with and stabilizes bases of the 16S rRNA that are involved in tRNA selection in the A site and with the mRNA backbone. Located at the interface of the 30S and 50S subunits, it traverses the body of the 30S subunit contacting proteins on the other side and probably holding the rRNA structure together. The combined cluster of proteins S8, S12 and S17 appears to hold together the shoulder and platform of the 30S subunit. The protein is Small ribosomal subunit protein uS12 of Parvibaculum lavamentivorans (strain DS-1 / DSM 13023 / NCIMB 13966).